The primary structure comprises 125 residues: Large ribosomal subunit protein bL12 (125 aa).

It belongs to the bacterial ribosomal protein bL12 family. As to quaternary structure, homodimer. Part of the ribosomal stalk of the 50S ribosomal subunit. Forms a multimeric L10(L12)X complex, where L10 forms an elongated spine to which 2 to 4 L12 dimers bind in a sequential fashion. Binds GTP-bound translation factors.

Forms part of the ribosomal stalk which helps the ribosome interact with GTP-bound translation factors. Is thus essential for accurate translation. In Dictyoglomus thermophilum (strain ATCC 35947 / DSM 3960 / H-6-12), this protein is Large ribosomal subunit protein bL12.